A 247-amino-acid chain; its full sequence is tRNA (guanine-N(1)-)-methyltransferase (247 aa).

Residues Gly115 and 134–139 each bind S-adenosyl-L-methionine; that span reads IGDFVL.

This sequence belongs to the RNA methyltransferase TrmD family. In terms of assembly, homodimer.

It localises to the cytoplasm. The catalysed reaction is guanosine(37) in tRNA + S-adenosyl-L-methionine = N(1)-methylguanosine(37) in tRNA + S-adenosyl-L-homocysteine + H(+). Functionally, specifically methylates guanosine-37 in various tRNAs. This Anaeromyxobacter sp. (strain K) protein is tRNA (guanine-N(1)-)-methyltransferase.